The sequence spans 218 residues: Sec-independent protein translocase protein TatB (218 aa).

The chain crosses the membrane as a helical span at residues 1–21; that stretch reads MFDIGFSELLLVLVIGLVVLG. 2 disordered regions span residues 126–145 and 174–218; these read AESATKAQASPQAPATDVDK and SSVD…GGDR. The span at 199–218 shows a compositional bias: basic and acidic residues; sequence HSTDSHGADQPRTHQPGGDR.

The protein belongs to the TatB family. As to quaternary structure, the Tat system comprises two distinct complexes: a TatABC complex, containing multiple copies of TatA, TatB and TatC subunits, and a separate TatA complex, containing only TatA subunits. Substrates initially bind to the TatABC complex, which probably triggers association of the separate TatA complex to form the active translocon.

It is found in the cell inner membrane. Functionally, part of the twin-arginine translocation (Tat) system that transports large folded proteins containing a characteristic twin-arginine motif in their signal peptide across membranes. Together with TatC, TatB is part of a receptor directly interacting with Tat signal peptides. TatB may form an oligomeric binding site that transiently accommodates folded Tat precursor proteins before their translocation. In Yersinia enterocolitica serotype O:8 / biotype 1B (strain NCTC 13174 / 8081), this protein is Sec-independent protein translocase protein TatB.